The chain runs to 506 residues: D-alanine--D-alanyl carrier protein ligase (506 aa).

152–153 contacts ATP; the sequence is TS. Position 197 (Asp-197) interacts with D-alanine. 292-297 serves as a coordination point for ATP; it reads NTYGPT. D-alanine is bound at residue Val-301. ATP is bound by residues Asp-383, 395-398, and Lys-494; that span reads YRGR. Lys-494 serves as a coordination point for D-alanine.

Belongs to the ATP-dependent AMP-binding enzyme family. DltA subfamily.

The protein resides in the cytoplasm. The catalysed reaction is holo-[D-alanyl-carrier protein] + D-alanine + ATP = D-alanyl-[D-alanyl-carrier protein] + AMP + diphosphate. The protein operates within cell wall biogenesis; lipoteichoic acid biosynthesis. Catalyzes the first step in the D-alanylation of lipoteichoic acid (LTA), the activation of D-alanine and its transfer onto the D-alanyl carrier protein (Dcp) DltC. In an ATP-dependent two-step reaction, forms a high energy D-alanyl-AMP intermediate, followed by transfer of the D-alanyl residue as a thiol ester to the phosphopantheinyl prosthetic group of the Dcp. D-alanylation of LTA plays an important role in modulating the properties of the cell wall in Gram-positive bacteria, influencing the net charge of the cell wall. This chain is D-alanine--D-alanyl carrier protein ligase, found in Lacticaseibacillus paracasei (strain ATCC 334 / BCRC 17002 / CCUG 31169 / CIP 107868 / KCTC 3260 / NRRL B-441) (Lactobacillus paracasei).